The following is a 177-amino-acid chain: Ribosome maturation factor RimM (177 aa).

Residues 98–171 (GETIFLSEIK…AVVMDLPEGL (74 aa)) form the PRC barrel domain.

Belongs to the RimM family. As to quaternary structure, binds ribosomal protein uS19.

The protein localises to the cytoplasm. Its function is as follows. An accessory protein needed during the final step in the assembly of 30S ribosomal subunit, possibly for assembly of the head region. Essential for efficient processing of 16S rRNA. May be needed both before and after RbfA during the maturation of 16S rRNA. It has affinity for free ribosomal 30S subunits but not for 70S ribosomes. In Bdellovibrio bacteriovorus (strain ATCC 15356 / DSM 50701 / NCIMB 9529 / HD100), this protein is Ribosome maturation factor RimM.